Consider the following 1350-residue polypeptide: Nidogen (1350 aa).

A signal peptide spans 1–22 (MPTFGSKLLACLLLSSVILVSG). An NIDO domain is found at 107–260 (AFYSNVDTSF…GVWLFEVAPI (154 aa)). Asparagine 231 carries an N-linked (GlcNAc...) asparagine glycan. Positions 281 to 321 (LALSCQAHAHQCHEKAECHDKAEGYCCVCGSGFYGNGKSCL) constitute an EGF-like 1 domain. 3 disulfide bridges follow: cysteine 285–cysteine 298, cysteine 292–cysteine 307, and cysteine 309–cysteine 320. One can recognise a Nidogen G2 beta-barrel domain in the interval 325–550 (QPIRVTGTLT…GVTPESNACN (226 aa)). N-linked (GlcNAc...) asparagine glycosylation is found at asparagine 423 and asparagine 480. The 39-residue stretch at 545–583 (ESNACNDGTADCVENSVCVPYEDTYRCDCYHGFAAQLDE) folds into the EGF-like 2 domain. Cystine bridges form between cysteine 549-cysteine 562, cysteine 556-cysteine 571, cysteine 595-cysteine 608, cysteine 602-cysteine 617, and cysteine 619-cysteine 630. An EGF-like 3; calcium-binding domain is found at 591–631 (DIDECATGSHVCDENAVCDNTEGGFNCYCTEGFEGNGYRCL). Asparagine 633 carries N-linked (GlcNAc...) asparagine glycosylation. The disordered stretch occupies residues 645 to 691 (VEGQAEPTSEPSPNPSPYPDQGQDQEREREDDQYPQPNPYPYPEEQI). 5 EGF-like domains span residues 788-829 (DLIP…YNCD), 832-874 (SDDS…FNCQ), 912-953 (PAGR…TGCT), 955-996 (KPLS…YVCI), and 997-1037 (EEQN…SLCQ). Disulfide bonds link cysteine 792–cysteine 804, cysteine 798–cysteine 815, cysteine 817–cysteine 828, cysteine 836–cysteine 849, cysteine 843–cysteine 860, cysteine 862–cysteine 873, cysteine 916–cysteine 927, cysteine 921–cysteine 938, cysteine 940–cysteine 952, cysteine 959–cysteine 971, cysteine 965–cysteine 982, cysteine 984–cysteine 995, cysteine 1001–cysteine 1014, cysteine 1008–cysteine 1023, and cysteine 1025–cysteine 1036. Asparagine 801 carries an N-linked (GlcNAc...) asparagine glycan. Asparagine 1032 is a glycosylation site (N-linked (GlcNAc...) asparagine). LDL-receptor class B repeat units lie at residues 1084–1126 (GRVY…DVIS), 1127–1170 (RRLY…DPYR), 1171–1216 (EKLF…LENS), and 1257–1282 (DQFY…QTPI).

In terms of tissue distribution, expressed in the basement membrane around the follicular epithelium of the adult ovary (at protein level).

The protein resides in the secreted. Its subcellular location is the extracellular space. It localises to the extracellular matrix. It is found in the basement membrane. Its function is as follows. Cell adhesion glycoprotein which is widely distributed in basement membranes. Involved in cell-extracellular matrix (ECM) interactions probably by connecting the laminin and collagen IV networks. Required for permeability and mechanical stability of basement membranes, and ECM dependent neural plasticity. Not involved in assembly of the embryonic basement membrane. The protein is Nidogen of Drosophila melanogaster (Fruit fly).